The following is a 471-amino-acid chain: Ribulose bisphosphate carboxylase large chain (471 aa).

Lys5 carries the post-translational modification N6,N6,N6-trimethyllysine. The substrate site is built by Asn114 and Thr164. The active-site Proton acceptor is the Lys166. Lys168 is a binding site for substrate. Mg(2+) contacts are provided by Lys192, Asp194, and Glu195. Lys192 is modified (N6-carboxylysine). His285 acts as the Proton acceptor in catalysis. Positions 286, 318, and 370 each coordinate substrate.

It belongs to the RuBisCO large chain family. Type I subfamily. In terms of assembly, heterohexadecamer of 8 large chains and 8 small chains; disulfide-linked. The disulfide link is formed within the large subunit homodimers. Mg(2+) serves as cofactor. The disulfide bond which can form in the large chain dimeric partners within the hexadecamer appears to be associated with oxidative stress and protein turnover.

It is found in the plastid. The protein localises to the chloroplast. The catalysed reaction is 2 (2R)-3-phosphoglycerate + 2 H(+) = D-ribulose 1,5-bisphosphate + CO2 + H2O. It carries out the reaction D-ribulose 1,5-bisphosphate + O2 = 2-phosphoglycolate + (2R)-3-phosphoglycerate + 2 H(+). In terms of biological role, ruBisCO catalyzes two reactions: the carboxylation of D-ribulose 1,5-bisphosphate, the primary event in carbon dioxide fixation, as well as the oxidative fragmentation of the pentose substrate in the photorespiration process. Both reactions occur simultaneously and in competition at the same active site. In Strychnos nux-vomica (Poison nut), this protein is Ribulose bisphosphate carboxylase large chain.